Consider the following 386-residue polypeptide: Putative 8-amino-7-oxononanoate synthase 2 (386 aa).

R21 provides a ligand contact to substrate. G104–Y105 is a binding site for pyridoxal 5'-phosphate. H129 serves as a coordination point for substrate. Pyridoxal 5'-phosphate contacts are provided by residues S176, D201–H204, and T230–K233. K233 is subject to N6-(pyridoxal phosphate)lysine.

This sequence belongs to the class-II pyridoxal-phosphate-dependent aminotransferase family. BioF subfamily. Homodimer. Pyridoxal 5'-phosphate is required as a cofactor.

The catalysed reaction is 6-carboxyhexanoyl-[ACP] + L-alanine + H(+) = (8S)-8-amino-7-oxononanoate + holo-[ACP] + CO2. It participates in cofactor biosynthesis; biotin biosynthesis. In terms of biological role, catalyzes the decarboxylative condensation of pimeloyl-[acyl-carrier protein] and L-alanine to produce 8-amino-7-oxononanoate (AON), [acyl-carrier protein], and carbon dioxide. This is Putative 8-amino-7-oxononanoate synthase 2 (bioF) from Bacillus velezensis (strain DSM 23117 / BGSC 10A6 / LMG 26770 / FZB42) (Bacillus amyloliquefaciens subsp. plantarum).